Here is a 271-residue protein sequence, read N- to C-terminus: Large ribosomal subunit protein uL2cz/uL2cy (271 aa).

Disordered stretches follow at residues 1–22 (MAKHLYKTPIPSTRKGTVDRQV) and 223–271 (PVDH…RRRK).

Belongs to the universal ribosomal protein uL2 family. Part of the 50S ribosomal subunit.

It is found in the plastid. The protein localises to the chloroplast. The chain is Large ribosomal subunit protein uL2cz/uL2cy (rpl2-A) from Sorghum bicolor (Sorghum).